The chain runs to 172 residues: Crossover junction endodeoxyribonuclease RuvC (172 aa).

Catalysis depends on residues D7, E67, and D140. D7, E67, and D140 together coordinate Mg(2+).

This sequence belongs to the RuvC family. In terms of assembly, homodimer which binds Holliday junction (HJ) DNA. The HJ becomes 2-fold symmetrical on binding to RuvC with unstacked arms; it has a different conformation from HJ DNA in complex with RuvA. In the full resolvosome a probable DNA-RuvA(4)-RuvB(12)-RuvC(2) complex forms which resolves the HJ. The cofactor is Mg(2+).

The protein localises to the cytoplasm. The catalysed reaction is Endonucleolytic cleavage at a junction such as a reciprocal single-stranded crossover between two homologous DNA duplexes (Holliday junction).. Functionally, the RuvA-RuvB-RuvC complex processes Holliday junction (HJ) DNA during genetic recombination and DNA repair. Endonuclease that resolves HJ intermediates. Cleaves cruciform DNA by making single-stranded nicks across the HJ at symmetrical positions within the homologous arms, yielding a 5'-phosphate and a 3'-hydroxyl group; requires a central core of homology in the junction. The consensus cleavage sequence is 5'-(A/T)TT(C/G)-3'. Cleavage occurs on the 3'-side of the TT dinucleotide at the point of strand exchange. HJ branch migration catalyzed by RuvA-RuvB allows RuvC to scan DNA until it finds its consensus sequence, where it cleaves and resolves the cruciform DNA. The sequence is that of Crossover junction endodeoxyribonuclease RuvC from Syntrophomonas wolfei subsp. wolfei (strain DSM 2245B / Goettingen).